A 142-amino-acid polypeptide reads, in one-letter code: Large ribosomal subunit protein uL13 (142 aa).

Belongs to the universal ribosomal protein uL13 family. Part of the 50S ribosomal subunit.

In terms of biological role, this protein is one of the early assembly proteins of the 50S ribosomal subunit, although it is not seen to bind rRNA by itself. It is important during the early stages of 50S assembly. The polypeptide is Large ribosomal subunit protein uL13 (Methanosphaera stadtmanae (strain ATCC 43021 / DSM 3091 / JCM 11832 / MCB-3)).